A 90-amino-acid polypeptide reads, in one-letter code: Probable Fe(2+)-trafficking protein (90 aa).

It belongs to the Fe(2+)-trafficking protein family.

Could be a mediator in iron transactions between iron acquisition and iron-requiring processes, such as synthesis and/or repair of Fe-S clusters in biosynthetic enzymes. In Marinobacter nauticus (strain ATCC 700491 / DSM 11845 / VT8) (Marinobacter aquaeolei), this protein is Probable Fe(2+)-trafficking protein.